A 504-amino-acid polypeptide reads, in one-letter code: Anaerobic nitric oxide reductase transcription regulator NorR (504 aa).

Residue Asp-57 is modified to 4-aspartylphosphate. In terms of domain architecture, Sigma-54 factor interaction spans Met-187–Val-416. ATP is bound by residues Gly-215–Glu-222 and Ala-278–Glu-287. The segment at residues Trp-479–Lys-498 is a DNA-binding region (H-T-H motif).

It participates in nitrogen metabolism; nitric oxide reduction. In terms of biological role, required for the expression of anaerobic nitric oxide (NO) reductase, acts as a transcriptional activator for at least the norVW operon. Activation also requires sigma-54. This chain is Anaerobic nitric oxide reductase transcription regulator NorR, found in Enterobacter sp. (strain 638).